The following is a 286-amino-acid chain: Pyridoxal kinase PdxY (286 aa).

Residues Ser9 and 44-45 (TQ) each bind substrate. Positions 111, 148, and 181 each coordinate ATP. Position 222 (Asp222) interacts with substrate.

Belongs to the pyridoxine kinase family. PdxY subfamily. Homodimer. It depends on Mg(2+) as a cofactor.

The catalysed reaction is pyridoxal + ATP = pyridoxal 5'-phosphate + ADP + H(+). It participates in cofactor metabolism; pyridoxal 5'-phosphate salvage; pyridoxal 5'-phosphate from pyridoxal: step 1/1. Its function is as follows. Pyridoxal kinase involved in the salvage pathway of pyridoxal 5'-phosphate (PLP). Catalyzes the phosphorylation of pyridoxal to PLP. The protein is Pyridoxal kinase PdxY of Actinobacillus pleuropneumoniae serotype 5b (strain L20).